A 559-amino-acid chain; its full sequence is MTQHTQTPSMPSPLWQYWRGLSGWNFYFLVKFGLLWAGYLNFHPLLNLVFMAFLLMPIPKYRLHRLRHWIAIPVGFALFWHDTWLPGPQSIMSQGTQVAEFSSGYLLDLIARFINWQMIGAIFVLLVAWLFLSQWIRVTVFVVAIMVWLNVLTLTGPVFTLWPAGQPTDTVTTTGGNAAATVATAGDKPVIGDMPAQTAPPTTANLNAWLNTFYAAEEKRKTTFPAQLPPDAQPFDLLVINICSLSWSDVEAAGLMSHPLWSHFDILFKHFNSGTSYSGPAAIRLLRASCGQPSHTRLYQPANNECYLFDNLAKLGFTQHLMMDHNGEFGGFLKEVRENGGMQSELMNQSGLPTALLSFDGSPVYDDLAVLNRWLTGEEREANSRSATFFNLLPLHDGNHFPGVSKTADYKIRAQKLFDELDAFFTELEKSGRKVMVVVVPEHGGALKGDRMQISGLRDIPSPSITNVPAGVKFFGMKAPHEGAPIDINQPSSYLAISELVVRAVDGKLFTEDSVNWNKLTSNLPQTAPVSENANAVVIQYQGKPYVRLNGGDWVPYPQ.

4 helical membrane-spanning segments follow: residues 34-54, 68-88, 113-133, and 139-159; these read LLWAGYLNFHPLLNLVFMAFL, HWIAIPVGFALFWHDTWLPGP, FINWQMIGAIFVLLVAWLFLS, and TVFVVAIMVWLNVLTLTGPVF.

It localises to the cell membrane. Functionally, required for cellulose biosynthesis. The polypeptide is Cellulose biosynthesis protein BcsG (bcsG) (Salmonella typhimurium (strain LT2 / SGSC1412 / ATCC 700720)).